A 107-amino-acid chain; its full sequence is Integration host factor subunit beta (107 aa).

The tract at residues 87–107 is disordered; sequence RERVNNGTRKNGGSADAASGG.

It belongs to the bacterial histone-like protein family. Heterodimer of an alpha and a beta chain.

Functionally, this protein is one of the two subunits of integration host factor, a specific DNA-binding protein that functions in genetic recombination as well as in transcriptional and translational control. The sequence is that of Integration host factor subunit beta from Granulibacter bethesdensis (strain ATCC BAA-1260 / CGDNIH1).